The sequence spans 943 residues: Isoleucine--tRNA ligase (943 aa).

A 'HIGH' region motif is present at residues 59-69; sequence PYANGQIHLGH. E577 contacts L-isoleucyl-5'-AMP. The short motif at 618–622 is the 'KMSKS' region element; that stretch reads KMSKS. ATP is bound at residue K621. Residues C906, C909, C926, and C929 each coordinate Zn(2+).

This sequence belongs to the class-I aminoacyl-tRNA synthetase family. IleS type 1 subfamily. Monomer. Zn(2+) serves as cofactor.

It localises to the cytoplasm. The enzyme catalyses tRNA(Ile) + L-isoleucine + ATP = L-isoleucyl-tRNA(Ile) + AMP + diphosphate. Its function is as follows. Catalyzes the attachment of isoleucine to tRNA(Ile). As IleRS can inadvertently accommodate and process structurally similar amino acids such as valine, to avoid such errors it has two additional distinct tRNA(Ile)-dependent editing activities. One activity is designated as 'pretransfer' editing and involves the hydrolysis of activated Val-AMP. The other activity is designated 'posttransfer' editing and involves deacylation of mischarged Val-tRNA(Ile). The protein is Isoleucine--tRNA ligase of Xylella fastidiosa (strain M12).